The sequence spans 808 residues: Probable potassium transporter 3 (808 aa).

Over 1-34 the chain is Cytoplasmic; the sequence is MPVADCESGLSPADVTGAGAANGNPGHWRSYYRH. A helical transmembrane segment spans residues 35–55; that stretch reads VLLLAYQSCGVVYGDLSTSPL. Over 56–81 the chain is Extracellular; the sequence is YVYKSTFIIGSLRRFQDEEIVFGVFS. The helical transmembrane segment at 82-102 threads the bilayer; the sequence is LVFWTLTLIPLLKYVFIVLAA. The Cytoplasmic segment spans residues 103–167; that stretch reads DDNGEGGTFA…FLENHRKSRT (65 aa). Residues 168-188 form a helical membrane-spanning segment; the sequence is FLLVTVLFGASLVIGDGVLTP. At 189 to 204 the chain is on the extracellular side; that stretch reads PMSVLSSFSGLQVHST. Residues 205–225 form a helical membrane-spanning segment; sequence ALTSGEVEILSCTVLVCLFMV. At 226 to 232 the chain is on the cytoplasmic side; it reads QHWGTHR. A helical transmembrane segment spans residues 233 to 253; the sequence is VAFLFAPVVIVWLLLLGALGV. Over 254–283 the chain is Extracellular; that stretch reads YNIVVWNPRVLRALSPYYLVRFFQHTGKDG. The chain crosses the membrane as a helical span at residues 284 to 304; that stretch reads WISLGGILLSMTGTEAMYADL. Over 305–313 the chain is Cytoplasmic; it reads GHFTAASIR. The helical transmembrane segment at 314–334 threads the bilayer; it reads VAFVGLIYPCLVLQYMGQAAF. The Extracellular portion of the chain corresponds to 335–354; that stretch reads LSKSPHCDIHFVFFESIPTG. The helical transmembrane segment at 355 to 375 threads the bilayer; that stretch reads IFWPVLVIATLAAIVGSQAVI. Residues 376–406 are Cytoplasmic-facing; it reads SATFSIVRQCTALGCFPRVKIVHTSRRIHGQ. Residues 407–427 traverse the membrane as a helical segment; sequence IYSPEINWILMLLCIAVTMGL. Residues 428–439 lie on the Extracellular side of the membrane; the sequence is RDTTLIGNAYGM. Residues 440-460 form a helical membrane-spanning segment; the sequence is ACAGVMLVTTLLMALVIVFVW. Residues 461-464 lie on the Cytoplasmic side of the membrane; it reads QYSC. A helical transmembrane segment spans residues 465–485; it reads LVAALFLVAFGVVEAVYLSAA. Residues 486 to 491 lie on the Extracellular side of the membrane; that stretch reads LMKVPQ. A helical membrane pass occupies residues 492–512; sequence GGWLPLVLSLVFVAVMYVWHY. Residues 513-808 lie on the Cytoplasmic side of the membrane; the sequence is GTRRKHQFDV…LIEVGMIYYV (296 aa).

Belongs to the HAK/KUP transporter (TC 2.A.72.3) family.

Its subcellular location is the membrane. Its function is as follows. High-affinity potassium transporter. The polypeptide is Probable potassium transporter 3 (HAK3) (Oryza sativa subsp. japonica (Rice)).